The following is a 76-amino-acid chain: Putative snRNP Sm-like protein (76 aa).

Residues 4–76 (RPLDVIHKSL…VLALSPVELE (73 aa)) form the Sm domain.

The protein belongs to the snRNP Sm proteins family.

The sequence is that of Putative snRNP Sm-like protein from Thermococcus kodakarensis (strain ATCC BAA-918 / JCM 12380 / KOD1) (Pyrococcus kodakaraensis (strain KOD1)).